The chain runs to 408 residues: Arginine biosynthesis bifunctional protein ArgJ (408 aa).

Thr156, Lys182, Thr193, Glu279, Asn403, and Ser408 together coordinate substrate. Residue Thr193 is the Nucleophile of the active site.

It belongs to the ArgJ family. In terms of assembly, heterotetramer of two alpha and two beta chains.

It is found in the cytoplasm. The catalysed reaction is N(2)-acetyl-L-ornithine + L-glutamate = N-acetyl-L-glutamate + L-ornithine. It catalyses the reaction L-glutamate + acetyl-CoA = N-acetyl-L-glutamate + CoA + H(+). It functions in the pathway amino-acid biosynthesis; L-arginine biosynthesis; L-ornithine and N-acetyl-L-glutamate from L-glutamate and N(2)-acetyl-L-ornithine (cyclic): step 1/1. It participates in amino-acid biosynthesis; L-arginine biosynthesis; N(2)-acetyl-L-ornithine from L-glutamate: step 1/4. In terms of biological role, catalyzes two activities which are involved in the cyclic version of arginine biosynthesis: the synthesis of N-acetylglutamate from glutamate and acetyl-CoA as the acetyl donor, and of ornithine by transacetylation between N(2)-acetylornithine and glutamate. The polypeptide is Arginine biosynthesis bifunctional protein ArgJ (Dechloromonas aromatica (strain RCB)).